A 458-amino-acid chain; its full sequence is MASPALAAALAAAAAEGPNGSDAGEWGSGGGANASGTDWVPPPGQYSAGAVAGLAAVVGFLIVFTVVGNVLVVIAVLTSRALRAPQNLFLVSLASADILVATLVMPFSLANELMAYWYFGQVWCGVYLALDVLFCTSSIVHLCAISLDRYWSVTQAVEYNLKRTPRRVKATIVAVWLISAVISFPPLVSFYRRPDGAAYPQCGLNDETWYILSSCIGSFFAPCLIMGLVYARIYRVAKLRTRTLSEKRGPAGPDGASPTTENGLGKAAGENGHCAPPRTEVEPDESSAAERRRRRGALRRGGRRREGAEGDTGSADGPGPGLAAEQGARTASRSPGPGGRLSRASSRSVEFFLSRRRRARSSVCRRKVAQAREKRFTFVLAVVMGVFVLCWFPFFFSYSLYGICREACQLPEPLFKFFFWIGYCNSSLNPVIYTVFNQDFRRSFKHILFRRRRRGFRQ.

Residues 1–51 are Extracellular-facing; the sequence is MASPALAAALAAAAAEGPNGSDAGEWGSGGGANASGTDWVPPPGQYSAGAV. 2 N-linked (GlcNAc...) asparagine glycosylation sites follow: asparagine 19 and asparagine 33. The chain crosses the membrane as a helical span at residues 52–76; the sequence is AGLAAVVGFLIVFTVVGNVLVVIAV. Topologically, residues 77–88 are cytoplasmic; the sequence is LTSRALRAPQNL. A helical transmembrane segment spans residues 89–114; that stretch reads FLVSLASADILVATLVMPFSLANELM. The Extracellular portion of the chain corresponds to 115 to 124; that stretch reads AYWYFGQVWC. The cysteines at positions 124 and 202 are disulfide-linked. Residues 125 to 147 traverse the membrane as a helical segment; that stretch reads GVYLALDVLFCTSSIVHLCAISL. Residues 148–168 are Cytoplasmic-facing; the sequence is DRYWSVTQAVEYNLKRTPRRV. Residues 169–191 traverse the membrane as a helical segment; it reads KATIVAVWLISAVISFPPLVSFY. At 192–207 the chain is on the extracellular side; the sequence is RRPDGAAYPQCGLNDE. A helical membrane pass occupies residues 208–231; sequence TWYILSSCIGSFFAPCLIMGLVYA. Residues 232–379 are Cytoplasmic-facing; the sequence is RIYRVAKLRT…QAREKRFTFV (148 aa). Positions 245–343 are disordered; sequence SEKRGPAGPD…SPGPGGRLSR (99 aa). Residues 291-303 are compositionally biased toward basic residues; the sequence is RRRRRGALRRGGR. The chain crosses the membrane as a helical span at residues 380-403; sequence LAVVMGVFVLCWFPFFFSYSLYGI. The Extracellular segment spans residues 404–416; it reads CREACQLPEPLFK. Residues 417–437 form a helical membrane-spanning segment; that stretch reads FFFWIGYCNSSLNPVIYTVFN. Over 438–458 the chain is Cytoplasmic; sequence QDFRRSFKHILFRRRRRGFRQ.

This sequence belongs to the G-protein coupled receptor 1 family. Adrenergic receptor subfamily. ADRA2C sub-subfamily.

The protein resides in the cell membrane. Its function is as follows. Alpha-2 adrenergic receptors mediate the catecholamine-induced inhibition of adenylate cyclase through the action of G proteins. This Mus musculus (Mouse) protein is Alpha-2C adrenergic receptor (Adra2c).